Here is an 89-residue protein sequence, read N- to C-terminus: Small ribosomal subunit protein uS15 (89 aa).

This sequence belongs to the universal ribosomal protein uS15 family. As to quaternary structure, part of the 30S ribosomal subunit. Forms a bridge to the 50S subunit in the 70S ribosome, contacting the 23S rRNA.

Functionally, one of the primary rRNA binding proteins, it binds directly to 16S rRNA where it helps nucleate assembly of the platform of the 30S subunit by binding and bridging several RNA helices of the 16S rRNA. Its function is as follows. Forms an intersubunit bridge (bridge B4) with the 23S rRNA of the 50S subunit in the ribosome. The polypeptide is Small ribosomal subunit protein uS15 (Limosilactobacillus fermentum (strain NBRC 3956 / LMG 18251) (Lactobacillus fermentum)).